A 618-amino-acid polypeptide reads, in one-letter code: DELLA protein SLN1 (618 aa).

The disordered stretch occupies residues 1–36 (MKREYQDGGGSGGGGDEMGSSRDKMMVSSSEAGEGE). Residues 7-17 (DGGGSGGGGDE) are compositionally biased toward gly residues. The DELLA motif signature appears at 39 to 43 (DELLA). Disordered regions lie at residues 106-137 (LNAPPPPLPPAPPQLNASTSSTVTGGGGYFDL) and 159-197 (APADLSADSVRDPKRMRTGGSSTSSSSSSSSSLGGGAAR). A compositionally biased stretch (pro residues) spans 108–118 (APPPPLPPAPP). 2 stretches are compositionally biased toward low complexity: residues 119 to 128 (QLNASTSSTV) and 176 to 197 (TGGSSTSSSSSSSSSLGGGAAR). The GRAS domain occupies 221-614 (VDTQEAGIRL…RPLIATSAWR (394 aa)). The tract at residues 228 to 284 (IRLVHALLACAEAVQQENLSAAEALVKQIPLLAASQGGAMRKVAAYFGEALARRVFR) is leucine repeat I (LRI). The short motif at 235-239 (LACAE) is the LxCxE motif element. A VHIID region spans residues 303-368 (HAHFYESCPY…GGPPSFRLTG (66 aa)). The short motif at 334–338 (VHVVD) is the VHIID element. The interval 382–421 (QVGWKLAQFAHTIRVDFQYRGLVAATLADLEPFMLQPEGE) is leucine repeat II (LRII). A PFYRE region spans residues 431–535 (IAVNSVFEMH…EVYLGRQICN (105 aa)). The interval 538-614 (ACEGTERTER…RPLIATSAWR (77 aa)) is SAW.

The protein belongs to the GRAS family. DELLA subfamily. In terms of processing, phosphorylated. Ubiquitinated. Upon GA application it is ubiquitinated, leading to its subsequent degradation. As to expression, apparently restricted to regions where growth is occurring in the leaf blade. Localizes almost exclusively to the basal elongation zone (EZ) for the elongating blades of L1, L2 and L3. More detailed fractionation of the L3 blade shows that in cv. Himalaya, it is preferentially localized to the basal third of the EZ, but its presence can still be detected toward the end of the EZ (at protein level).

It localises to the nucleus. In terms of biological role, probable transcriptional regulator that acts as a repressor of the gibberellin (GA) signaling pathway. Probably acts by participating in large multiprotein complexes that repress transcription of GA-inducible genes. Upon GA application, it is degraded by the proteasome, allowing the GA signaling pathway. Acts as a negative regulator of GAMYB gene expression. This chain is DELLA protein SLN1 (SLN1), found in Hordeum vulgare (Barley).